We begin with the raw amino-acid sequence, 351 residues long: S-adenosylmethionine:tRNA ribosyltransferase-isomerase (351 aa).

This sequence belongs to the QueA family. In terms of assembly, monomer.

The protein localises to the cytoplasm. It catalyses the reaction 7-aminomethyl-7-carbaguanosine(34) in tRNA + S-adenosyl-L-methionine = epoxyqueuosine(34) in tRNA + adenine + L-methionine + 2 H(+). It participates in tRNA modification; tRNA-queuosine biosynthesis. Its function is as follows. Transfers and isomerizes the ribose moiety from AdoMet to the 7-aminomethyl group of 7-deazaguanine (preQ1-tRNA) to give epoxyqueuosine (oQ-tRNA). This is S-adenosylmethionine:tRNA ribosyltransferase-isomerase from Fusobacterium nucleatum subsp. nucleatum (strain ATCC 25586 / DSM 15643 / BCRC 10681 / CIP 101130 / JCM 8532 / KCTC 2640 / LMG 13131 / VPI 4355).